The chain runs to 256 residues: MLSFKIRDKTFESRLFLGTGKFGSNQQMEEAILASGSELVTVALKRIDLETQTDAILAHLKHPRINLLPNTSGARNAKEAIFAAQLAREALETNWLKLEIHPDPKYLMPDAIETLKATEELAKLGFIILPYIHADPVLCKRLEEAGTSAVMPLGSPIGSNKGLKTIDFLEIIIEQSKVPVIIDAGIGAPSDAAKAMELGADAVLVNTAIAIAGNPKLMAEAFKEAVMAGRKAYEAKLAQKASQAVASSPLTAFLYE.

Lysine 97 serves as the catalytic Schiff-base intermediate with DXP. 1-deoxy-D-xylulose 5-phosphate is bound by residues glycine 158, 184 to 185 (AG), and 206 to 207 (NT).

It belongs to the ThiG family. In terms of assembly, homotetramer. Forms heterodimers with either ThiH or ThiS.

It localises to the cytoplasm. It carries out the reaction [ThiS sulfur-carrier protein]-C-terminal-Gly-aminoethanethioate + 2-iminoacetate + 1-deoxy-D-xylulose 5-phosphate = [ThiS sulfur-carrier protein]-C-terminal Gly-Gly + 2-[(2R,5Z)-2-carboxy-4-methylthiazol-5(2H)-ylidene]ethyl phosphate + 2 H2O + H(+). It functions in the pathway cofactor biosynthesis; thiamine diphosphate biosynthesis. In terms of biological role, catalyzes the rearrangement of 1-deoxy-D-xylulose 5-phosphate (DXP) to produce the thiazole phosphate moiety of thiamine. Sulfur is provided by the thiocarboxylate moiety of the carrier protein ThiS. In vitro, sulfur can be provided by H(2)S. This is Thiazole synthase from Flavobacterium psychrophilum (strain ATCC 49511 / DSM 21280 / CIP 103535 / JIP02/86).